Here is a 523-residue protein sequence, read N- to C-terminus: MVVLAASIISKSGKALVSRQFVDMSRIRIEGLLAAFPKLVGTGKQHTYVETENVRYVYQPIEGLYLLLITNKQSNILEDLDTLRLLSKLVPEYSPSLDEEGVCKTAFELIFAFDEAICLGNKENVTVQQVKQYCEMESHEEKAHKLMMQSKINETRDVMKKKASELDKMKMERGKLDKGGYSAISGPRVVEKAFGDMSITGSGFGSGSGLGGLSMDMDSFASKPKGRPSAAATAPGKGLGMKLGKTQKTNQFLESLKAEGEVILEDVQPSSVQSRVSPLPPSDPVTVTIEEKLNVTVKRDGGVNNFDVQGTLALQVLNDTDGFIQLQIENQDVPGLSFKTHPNINKDLFNSQQVVGAKDPNRPFPSGQNETPLVKWRIHGMDESSLPLSVNCWPSVSGNETYVNIEYEAAEMFDLHNVVISIPLPALREAPSVRQIDGEWRYDSRNSVLEWSILLIDQSNRSGSMEFVVPPADPSTFFPISIGFSASSTFSDLKVTGIRPLKDGNPPKYSQRARLVTANYQVV.

The disordered stretch occupies residues 218–243; it reads DSFASKPKGRPSAAATAPGKGLGMKL. The region spanning 282-523 is the MHD domain; it reads SDPVTVTIEE…RLVTANYQVV (242 aa).

It belongs to the adaptor complexes medium subunit family. Delta-COP subfamily. Oligomeric complex that consists of at least the alpha, beta, beta', gamma, delta, epsilon and zeta subunits.

The protein localises to the cytoplasm. The protein resides in the golgi apparatus membrane. Its subcellular location is the cytoplasmic vesicle. It is found in the COPI-coated vesicle membrane. Functionally, the coatomer is a cytosolic protein complex that binds to dilysine motifs and reversibly associates with Golgi non-clathrin-coated vesicles, which further mediate biosynthetic protein transport from the ER, via the Golgi up to the trans Golgi network. Coatomer complex is required for budding from Golgi membranes, and is essential for the retrograde Golgi-to-ER transport of dilysine-tagged proteins. The sequence is that of Coatomer subunit delta-2 from Oryza sativa subsp. japonica (Rice).